We begin with the raw amino-acid sequence, 473 residues long: Dol-P-Glc:Glc(2)Man(9)GlcNAc(2)-PP-Dol alpha-1,2-glucosyltransferase (473 aa).

Topologically, residues 1–6 are cytoplasmic; sequence MAQLEG. A helical transmembrane segment spans residues 7–27; the sequence is YCFSAALSCTFLVSCLLFSAF. Residues 28–64 lie on the Extracellular side of the membrane; sequence SRALREPYMDEIFHLPQAQRYCEGHFSLSQWDPMITT. Residues 65–85 form a helical membrane-spanning segment; that stretch reads LPGLYLVSVGVVKPAIWIFAW. The Cytoplasmic portion of the chain corresponds to 86–97; sequence SEHVVCSIGMLR. Residues 98–118 form a helical membrane-spanning segment; the sequence is FVNLLFSVGNFYLLYLLFHKV. Residues 119-126 are Extracellular-facing; the sequence is QPRNKAAS. Residues 127 to 147 form a helical membrane-spanning segment; it reads SIQRVLSTLTLAVFPTLYFFN. Residues 148–150 lie on the Cytoplasmic side of the membrane; it reads FLY. Residues 151–171 traverse the membrane as a helical segment; the sequence is YTEAGSMFFTLFAYLMCLYGN. At 172–175 the chain is on the extracellular side; the sequence is HKTS. Residues 176–196 form a helical membrane-spanning segment; that stretch reads AFLGFCGFMFRQTNIIWAVFC. At 197–256 the chain is on the cytoplasmic side; that stretch reads AGNVIAQKLTEAWKTELQKKEDRLPPIKGPFAEFRKILQFLLAYSMSFKNLSMLFCLTWP. Residues 257 to 277 form a helical membrane-spanning segment; the sequence is YILLGFLFCAFVVVNGGIVIG. Over 278–283 the chain is Extracellular; it reads DRSSHE. The chain crosses the membrane as a helical span at residues 284–304; that stretch reads ACLHFPQLFYFFSFTLFFSFP. Residues 305–317 are Cytoplasmic-facing; sequence HLLSPSKIKTFLS. Residues 318 to 338 form a helical membrane-spanning segment; sequence LVWKHGILFLVVTLVSVFLVW. Topologically, residues 339 to 365 are extracellular; that stretch reads KFTYAHKYLLADNRHYTFYVWKRVFQR. The helical transmembrane segment at 366–386 threads the bilayer; that stretch reads YAILKYLLVPAYIFAGWSIAD. Residues 387-392 lie on the Cytoplasmic side of the membrane; the sequence is SLKSKP. A helical transmembrane segment spans residues 393-413; it reads IFWNLMFFICLFIVIVPQKLL. Topologically, residues 414-436 are extracellular; it reads EFRYFILPYVIYRLNITLPPTSR. A helical membrane pass occupies residues 437-457; it reads LVCELSCYAIVNFITFYIFLN. The Cytoplasmic portion of the chain corresponds to 458-473; the sequence is KTFQWPNSQDIQRFMW.

The protein belongs to the ALG10 glucosyltransferase family. In terms of assembly, interacts with KCNH1; may regulate KCNH1, possibly by regulating its N-glycosylation. Interacts with KCNH2; may reduce KCNH2 sensitivity to classic proarrhythmic drug blockade, possibly by regulating its N-glycosylation. In terms of tissue distribution, highly expressed in heart, placenta, liver, kidney and pancreas. Weakly expressed in lung, skeletal muscle and brain.

It is found in the endoplasmic reticulum membrane. It catalyses the reaction an alpha-D-Glc-(1-&gt;3)-alpha-D-Glc-(1-&gt;3)-alpha-D-Man-(1-&gt;2)-alpha-D-Man-(1-&gt;2)-alpha-D-Man-(1-&gt;3)-[alpha-D-Man-(1-&gt;2)-alpha-D-Man-(1-&gt;3)-[alpha-D-Man-(1-&gt;2)-alpha-D-Man-(1-&gt;6)]-alpha-D-Man-(1-&gt;6)]-beta-D-Man-(1-&gt;4)-beta-D-GlcNAc-(1-&gt;4)-alpha-D-GlcNAc-diphospho-di-trans,poly-cis-dolichol + a di-trans,poly-cis-dolichyl beta-D-glucosyl phosphate = a alpha-D-Glc-(1-&gt;2)-alpha-D-Glc-(1-&gt;3)-alpha-D-Glc-(1-&gt;3)-alpha-D-Man-(1-&gt;2)-alpha-D-Man-(1-&gt;2)-alpha-D-Man-(1-&gt;3)-[alpha-D-Man-(1-&gt;2)-alpha-D-Man-(1-&gt;3)-[alpha-D-Man-(1-&gt;2)-alpha-D-Man-(1-&gt;6)]-alpha-D-Man-(1-&gt;6)]-beta-D-Man-(1-&gt;4)-beta-D-GlcNAc-(1-&gt;4)-alpha-D-GlcNAc-diphospho-di-trans,poly-cis-dolichol + a di-trans,poly-cis-dolichyl phosphate + H(+). Its pathway is protein modification; protein glycosylation. Dol-P-Glc:Glc(2)Man(9)GlcNAc(2)-PP-Dol alpha-1,2-glucosyltransferase that operates in the biosynthetic pathway of dolichol-linked oligosaccharides, the glycan precursors employed in protein asparagine (N)-glycosylation. The assembly of dolichol-linked oligosaccharides begins on the cytosolic side of the endoplasmic reticulum membrane and finishes in its lumen. The sequential addition of sugars to dolichol pyrophosphate produces dolichol-linked oligosaccharides containing fourteen sugars, including two GlcNAcs, nine mannoses and three glucoses. Once assembled, the oligosaccharide is transferred from the lipid to nascent proteins by oligosaccharyltransferases. In the lumen of the endoplasmic reticulum, adds the third and last glucose residue from dolichyl phosphate glucose (Dol-P-Glc) onto the lipid-linked oligosaccharide intermediate Glc(2)Man(9)GlcNAc(2)-PP-Dol to produce Glc(3)Man(9)GlcNAc(2)-PP-Dol. This is Dol-P-Glc:Glc(2)Man(9)GlcNAc(2)-PP-Dol alpha-1,2-glucosyltransferase from Homo sapiens (Human).